A 597-amino-acid chain; its full sequence is DNA ligase (597 aa).

Glutamate 262 is a binding site for ATP. The active-site N6-AMP-lysine intermediate is the lysine 264. ATP-binding residues include arginine 269, arginine 284, glutamate 314, phenylalanine 354, arginine 431, and lysine 437.

It belongs to the ATP-dependent DNA ligase family. The cofactor is Mg(2+). Mn(2+) is required as a cofactor.

The enzyme catalyses ATP + (deoxyribonucleotide)n-3'-hydroxyl + 5'-phospho-(deoxyribonucleotide)m = (deoxyribonucleotide)n+m + AMP + diphosphate.. It carries out the reaction ADP + (deoxyribonucleotide)n-3'-hydroxyl + 5'-phospho-(deoxyribonucleotide)m = (deoxyribonucleotide)n+m + AMP + phosphate.. The catalysed reaction is GTP + (deoxyribonucleotide)n-3'-hydroxyl + 5'-phospho-(deoxyribonucleotide)m = (deoxyribonucleotide)n+m + GMP + diphosphate.. With respect to regulation, inhibited by Ca(2+) and Zn(2+). In terms of biological role, DNA ligase that seals nicks in double-stranded DNA during DNA replication, DNA recombination and DNA repair. Can use both ATP and ADP. The chain is DNA ligase from Staphylothermus marinus (strain ATCC 43588 / DSM 3639 / JCM 9404 / F1).